We begin with the raw amino-acid sequence, 319 residues long: Adenosine receptor A3 (319 aa).

At M1–T15 the chain is on the extracellular side. N5 and N13 each carry an N-linked (GlcNAc...) asparagine glycan. A helical transmembrane segment spans residues Y16–V38. Residues K39–V49 are Cytoplasmic-facing. The helical transmembrane segment at Y50–V73 threads the bilayer. The Extracellular portion of the chain corresponds to S74–L85. An intrachain disulfide couples C84 to C167. The chain crosses the membrane as a helical span at residues F86 to V107. The Cytoplasmic segment spans residues H108–R127. The helical transmembrane segment at I128–G149 threads the bilayer. Residues W150 to M178 lie on the Extracellular side of the membrane. The N-linked (GlcNAc...) asparagine glycan is linked to N161. Residues V179–L199 form a helical membrane-spanning segment. The Cytoplasmic portion of the chain corresponds to D200–S232. A helical membrane pass occupies residues L233–F256. The Extracellular segment spans residues D257–D262. A helical membrane pass occupies residues V263 to C285. Topologically, residues K286 to E319 are cytoplasmic. C304 carries the S-palmitoyl cysteine lipid modification.

This sequence belongs to the G-protein coupled receptor 1 family. Phosphorylation on Thr-317 and Thr-318 may be crucial for rapid desensitization. Phosphorylation on Thr-317 may be necessary for phosphorylation on Thr-318 to occur.

It localises to the cell membrane. Functionally, receptor for adenosine. The activity of this receptor is mediated by G proteins which inhibits adenylyl cyclase. This chain is Adenosine receptor A3 (Adora3), found in Mus musculus (Mouse).